A 126-amino-acid polypeptide reads, in one-letter code: Large ribosomal subunit protein bL12 (126 aa).

Belongs to the bacterial ribosomal protein bL12 family. As to quaternary structure, homodimer. Part of the ribosomal stalk of the 50S ribosomal subunit. Forms a multimeric L10(L12)X complex, where L10 forms an elongated spine to which 2 to 4 L12 dimers bind in a sequential fashion. Binds GTP-bound translation factors.

In terms of biological role, forms part of the ribosomal stalk which helps the ribosome interact with GTP-bound translation factors. Is thus essential for accurate translation. The protein is Large ribosomal subunit protein bL12 of Corynebacterium diphtheriae (strain ATCC 700971 / NCTC 13129 / Biotype gravis).